Reading from the N-terminus, the 650-residue chain is Chaperone protein DnaK (650 aa).

Phosphothreonine; by autocatalysis is present on Thr200. A disordered region spans residues 614 to 634; it reads AGAAGAAGAAEGAAHAGGAQQ.

The protein belongs to the heat shock protein 70 family.

Functionally, acts as a chaperone. The polypeptide is Chaperone protein DnaK (Burkholderia cenocepacia (strain ATCC BAA-245 / DSM 16553 / LMG 16656 / NCTC 13227 / J2315 / CF5610) (Burkholderia cepacia (strain J2315))).